The following is a 48-amino-acid chain: DNA-directed RNA polymerase subunit Rpo12 (48 aa).

Zn(2+)-binding residues include Cys9, Cys26, and Cys29.

This sequence belongs to the archaeal Rpo12/eukaryotic RPC10 RNA polymerase subunit family. As to quaternary structure, part of the RNA polymerase complex. Requires Zn(2+) as cofactor.

It is found in the cytoplasm. It carries out the reaction RNA(n) + a ribonucleoside 5'-triphosphate = RNA(n+1) + diphosphate. In terms of biological role, DNA-dependent RNA polymerase (RNAP) catalyzes the transcription of DNA into RNA using the four ribonucleoside triphosphates as substrates. The sequence is that of DNA-directed RNA polymerase subunit Rpo12 from Saccharolobus islandicus (strain Y.N.15.51 / Yellowstone #2) (Sulfolobus islandicus).